Reading from the N-terminus, the 263-residue chain is HTH-type transcriptional repressor NanR (263 aa).

Residues 1–23 (MSPMNAFDPQAEDSTTTIGRNLR) form a disordered region. The 69-residue stretch at 30–98 (KKLSEMVEEE…NGERARVSRP (69 aa)) folds into the HTH gntR-type domain. The segment at residues 58 to 77 (ERELMAFFNVGRPSVREALA) is a DNA-binding region (H-T-H motif).

Belongs to the NanR family.

Functionally, transcriptional repressor that controls expression of the genes required for the catabolism of sialic acids. This is HTH-type transcriptional repressor NanR from Escherichia coli O45:K1 (strain S88 / ExPEC).